The chain runs to 329 residues: uncharacterized protein (329 aa).

This is an uncharacterized protein from Bacillus subtilis (strain 168).